Reading from the N-terminus, the 178-residue chain is MEIINWLSLAMIPIIIAGILLYGTIKKVPTYESFVEGGKEGIEIAFSIIPYLVGMLVAITVFRSSGALDFIMDLLKPAFSAIGIPAEVVPLALIRPISGTAALGMTTDLIAVYGPDSFIGRLASVMQGSTDTTLYVLTVYFGAVGIKKMGDALKVGLLADLIGVVASIIIVTLLFGSA.

3 helical membrane-spanning segments follow: residues 3 to 23, 42 to 62, and 155 to 175; these read IINWLSLAMIPIIIAGILLYG, IEIAFSIIPYLVGMLVAITVF, and VGLLADLIGVVASIIIVTLLF.

Belongs to the SpmB family.

The protein localises to the cell membrane. Involved in spore core dehydration; might be involved in the transport of something into or out of the forespore or could be required for some modification of the cortex peptidoglycan structure. The protein is Spore maturation protein B (spmB) of Bacillus subtilis (strain 168).